An 804-amino-acid chain; its full sequence is Probable cadmium-transporting ATPase (804 aa).

2 HMA domains span residues 11-74 (DKQV…LKVA) and 89-152 (DKNV…LKVI). Positions 22, 25, 100, and 103 each coordinate Cd(2+). The next 5 membrane-spanning stretches (helical) occupy residues 183–203 (STLL…FVNG), 207–227 (LVTS…LFKV), 248–268 (IGAA…LFAI), 413–433 (IIMV…GGSW), and 441–461 (LAVL…ISIV). Catalysis depends on Asp-492, which acts as the 4-aspartylphosphate intermediate. The next 2 membrane-spanning stretches (helical) occupy residues 749–771 (LNII…LLVI) and 776–798 (TLWI…SLRL).

The protein belongs to the cation transport ATPase (P-type) (TC 3.A.3) family. Type IB subfamily.

Its subcellular location is the cell membrane. The catalysed reaction is Cd(2+)(in) + ATP + H2O = Cd(2+)(out) + ADP + phosphate + H(+). Couples the hydrolysis of ATP with the export of cadmium. Involved in cadmium resistance. This chain is Probable cadmium-transporting ATPase (cadA), found in Staphylococcus aureus.